The following is a 90-amino-acid chain: Small ribosomal subunit protein uS19 (90 aa).

Belongs to the universal ribosomal protein uS19 family.

Its function is as follows. Protein S19 forms a complex with S13 that binds strongly to the 16S ribosomal RNA. In Nitrosococcus oceani (strain ATCC 19707 / BCRC 17464 / JCM 30415 / NCIMB 11848 / C-107), this protein is Small ribosomal subunit protein uS19.